The following is a 322-amino-acid chain: Formimidoylglutamase (322 aa).

6 residues coordinate Mn(2+): histidine 127, aspartate 163, histidine 165, aspartate 167, aspartate 254, and aspartate 256.

This sequence belongs to the arginase family. Mn(2+) serves as cofactor.

The catalysed reaction is N-formimidoyl-L-glutamate + H2O = formamide + L-glutamate. Its pathway is amino-acid degradation; L-histidine degradation into L-glutamate; L-glutamate from N-formimidoyl-L-glutamate (hydrolase route): step 1/1. Its function is as follows. Catalyzes the conversion of N-formimidoyl-L-glutamate to L-glutamate and formamide. The protein is Formimidoylglutamase of Paraburkholderia xenovorans (strain LB400).